The chain runs to 337 residues: Ferredoxin--NADP reductase (337 aa).

E42, Q50, Y55, V97, F130, D292, and T333 together coordinate FAD.

The protein belongs to the ferredoxin--NADP reductase type 2 family. As to quaternary structure, homodimer. FAD is required as a cofactor.

It carries out the reaction 2 reduced [2Fe-2S]-[ferredoxin] + NADP(+) + H(+) = 2 oxidized [2Fe-2S]-[ferredoxin] + NADPH. The protein is Ferredoxin--NADP reductase of Streptococcus mutans serotype c (strain ATCC 700610 / UA159).